Here is a 54-residue protein sequence, read N- to C-terminus: UPF0391 membrane protein Aave_3864 (54 aa).

The next 2 membrane-spanning stretches (helical) occupy residues 5–25 and 28–48; these read AVVF…GIAA and VGIA…TFVL.

The protein belongs to the UPF0391 family.

It is found in the cell membrane. This chain is UPF0391 membrane protein Aave_3864, found in Paracidovorax citrulli (strain AAC00-1) (Acidovorax citrulli).